Here is a 255-residue protein sequence, read N- to C-terminus: 3-oxoacyl-[acyl-carrier-protein] reductase MabA (255 aa).

NADP(+)-binding positions include 32-35 (NRGI), Arg55, 69-70 (DV), Gly98, Tyr161, Lys165, Ile194, and Arg205. Tyr161 acts as the Proton acceptor in catalysis.

It belongs to the short-chain dehydrogenases/reductases (SDR) family. As to quaternary structure, homotetramer.

It is found in the secreted. The protein resides in the cell wall. The catalysed reaction is a (3R)-hydroxyacyl-[ACP] + NADP(+) = a 3-oxoacyl-[ACP] + NADPH + H(+). It catalyses the reaction a (3R)-3-hydroxyacyl-CoA + NADP(+) = a 3-oxoacyl-CoA + NADPH + H(+). It carries out the reaction (3R)-3-hydroxybutanoyl-CoA + NADP(+) = acetoacetyl-CoA + NADPH + H(+). The enzyme catalyses (3R)-hydroxyoctanoyl-CoA + NADP(+) = 3-oxooctanoyl-CoA + NADPH + H(+). It functions in the pathway lipid metabolism; mycolic acid biosynthesis. Part of the mycobacterial fatty acid elongation system FAS-II, which is involved in mycolic acid biosynthesis. Catalyzes the NADPH-dependent reduction of beta-ketoacyl derivatives, the second step of the FAS-II elongation cycle. Has a preference for longer substrates. Can use CoA derivatives as substrates in vitro. The sequence is that of 3-oxoacyl-[acyl-carrier-protein] reductase MabA from Mycolicibacterium smegmatis (strain ATCC 700084 / mc(2)155) (Mycobacterium smegmatis).